The primary structure comprises 233 residues: 7-cyano-7-deazaguanine synthase (233 aa).

8–18 contacts ATP; sequence LSGGLDSTTCM. Positions 186, 194, 197, and 200 each coordinate Zn(2+).

Belongs to the QueC family. In terms of assembly, homodimer. Zn(2+) is required as a cofactor.

The enzyme catalyses 7-carboxy-7-deazaguanine + NH4(+) + ATP = 7-cyano-7-deazaguanine + ADP + phosphate + H2O + H(+). The protein operates within purine metabolism; 7-cyano-7-deazaguanine biosynthesis. Functionally, catalyzes the ATP-dependent conversion of 7-carboxy-7-deazaguanine (CDG) to 7-cyano-7-deazaguanine (preQ(0)). The chain is 7-cyano-7-deazaguanine synthase from Desulfitobacterium hafniense (strain DSM 10664 / DCB-2).